A 177-amino-acid chain; its full sequence is Ribulose bisphosphate carboxylase small subunit, chloroplastic 5 (177 aa).

Residues 1–56 (MASSMMASTAAVARAGPAQSSMVAPFNGLRSSVAFPATRKANNDLSTLPSNGGRVS) constitute a chloroplast transit peptide.

The protein belongs to the RuBisCO small chain family. In terms of assembly, heterohexadecamer of 8 large and 8 small subunits.

It localises to the plastid. The protein resides in the chloroplast. Functionally, ruBisCO catalyzes two reactions: the carboxylation of D-ribulose 1,5-bisphosphate, the primary event in carbon dioxide fixation, as well as the oxidative fragmentation of the pentose substrate. Both reactions occur simultaneously and in competition at the same active site. Although the small subunit is not catalytic it is essential for maximal activity. This is Ribulose bisphosphate carboxylase small subunit, chloroplastic 5 from Lemna gibba (Swollen duckweed).